A 186-amino-acid polypeptide reads, in one-letter code: Intraflagellar transport protein 27 homolog (186 aa).

GTP contacts are provided by residues 12–19 (GDPTVGKT), 64–68 (DSAGK), and 123–126 (NKTD).

This sequence belongs to the small GTPase superfamily. Rab family. Component of the IFT complex B, at least composed of IFT20, IFT22, IFT25, IFT27, IFT46, IFT52, TRAF3IP1/IFT54, IFT57, IFT74, IFT80, IFT81, and IFT88. Interacts with IFT25. Interacts with IFT70B. Interacts with RABL2/RABL2A; binding is equal in the presence of GTP or GDP. Interacts with IFT88. Interacts with ARL6; recognizes and binds with the GTP-free form of ARL6.

The protein localises to the cell projection. Its subcellular location is the cilium. It is found in the cytoplasm. It localises to the flagellum. Small GTPase-like component of the intraflagellar transport (IFT) complex B that promotes the exit of the BBSome complex from cilia via its interaction with ARL6. Not involved in entry of the BBSome complex into cilium. Prevents aggregation of GTP-free ARL6. Required for hedgehog signaling. Forms a subcomplex within the IFT complex B with IFT25. Its role in intraflagellar transport is mainly seen in tissues rich in ciliated cells such as kidney and testis. Essential for male fertility, spermiogenesis and sperm flagella formation. Plays a role in the early development of the kidney. May be involved in the regulation of ureteric bud initiation. This chain is Intraflagellar transport protein 27 homolog (IFT27), found in Bos taurus (Bovine).